A 418-amino-acid polypeptide reads, in one-letter code: Homeobox protein H2.0 (418 aa).

A compositionally biased stretch (basic residues) spans 190–216 (QHQKQQHQQHHHHQHHPKHLHQQHKPP). Disordered regions lie at residues 190-223 (QHQK…STTA), 259-296 (TSPA…RKRS), and 354-418 (RENL…NVVE). Residues 259–273 (TSPAAAAAATSQNGA) are compositionally biased toward low complexity. Positions 295–354 (RSWSRAVFSNLQRKGLEIQFQQQKYITKPDRRKLAARLNLTDAQVKVWFQNRRMKWRHTR) form a DNA-binding region, homeobox. A compositionally biased stretch (low complexity) spans 391–403 (DYSSDSCSSVDLS).

The protein belongs to the H2.0 homeobox family. Expressed in cells of the visceral musculature and its anlagen.

The protein resides in the nucleus. Functionally, may play a role in pattern formation during embryonic and imaginal development. Is not essential for visceral muscle morphogenesis. The sequence is that of Homeobox protein H2.0 (H2.0) from Drosophila melanogaster (Fruit fly).